A 106-amino-acid polypeptide reads, in one-letter code: COX assembly mitochondrial protein homolog (106 aa).

At Ala2 the chain carries N-acetylalanine. A CHCH domain is found at 28-71 (KERCSEQVQDFTKCCKNSGVLMVVKCRKENSALKECLTAYYNDP). Short sequence motifs (cx9C motif) lie at residues 31–41 (CSEQVQDFTKC) and 53–63 (CRKENSALKEC). Intrachain disulfides connect Cys31/Cys63 and Cys41/Cys53.

It belongs to the CMC family. Component of the MITRAC (mitochondrial translation regulation assembly intermediate of cytochrome c oxidase complex) complex, the core components of this complex being COA3/MITRAC12 and COX14.

It is found in the mitochondrion. Component of the MITRAC (mitochondrial translation regulation assembly intermediate of cytochrome c oxidase complex) complex, that regulates cytochrome c oxidase assembly. This is COX assembly mitochondrial protein homolog (CMC1) from Homo sapiens (Human).